Here is a 1305-residue protein sequence, read N- to C-terminus: Serine protease EspC (1305 aa).

Positions 1–53 are cleaved as a signal peptide; the sequence is MNKIYALKYCHATGGLIAVSELASRVMKKAARGSLLALFNLSLYGAFLSASQA. Residues 55–297 form the Peptidase S6 domain; it reads QLNIDNVWAR…SILNQYDENT (243 aa). Residues H125, D153, and S256 each act as charge relay system in the active site. Residues 1039 to 1305 form the Autotransporter domain; sequence DTQGDAGVWA…AINANFRYSF (267 aa).

Cleaved to release the mature protein from the outer membrane.

The protein resides in the periplasm. Its subcellular location is the secreted. The protein localises to the cell surface. It is found in the cell outer membrane. With respect to regulation, inhibition of cytotoxic activity by phenylmethylsulfonyl fluoride. Functionally, serine protease with enterotoxic and cytotoxic activities. Cleaves fodrin, but does not cause its redistribution within epithelial cells. The exact role of EspC in EPEC pathogenesis is still unknown. This chain is Serine protease EspC (espC), found in Escherichia coli O127:H6 (strain E2348/69 / EPEC).